We begin with the raw amino-acid sequence, 156 residues long: Ribosomal RNA large subunit methyltransferase H (156 aa).

Residues L73, G104, and 123–128 (LSPLTL) each bind S-adenosyl-L-methionine.

The protein belongs to the RNA methyltransferase RlmH family. As to quaternary structure, homodimer.

The protein localises to the cytoplasm. It carries out the reaction pseudouridine(1915) in 23S rRNA + S-adenosyl-L-methionine = N(3)-methylpseudouridine(1915) in 23S rRNA + S-adenosyl-L-homocysteine + H(+). Its function is as follows. Specifically methylates the pseudouridine at position 1915 (m3Psi1915) in 23S rRNA. The chain is Ribosomal RNA large subunit methyltransferase H from Aliivibrio fischeri (strain MJ11) (Vibrio fischeri).